Consider the following 1213-residue polypeptide: DNA-directed RNA polymerase subunit beta' (1213 aa).

Zn(2+) is bound by residues Cys60, Cys62, Cys75, and Cys78. Mg(2+) is bound by residues Asp450, Asp452, and Asp454. Residues Cys819, Cys893, Cys900, and Cys903 each contribute to the Zn(2+) site.

It belongs to the RNA polymerase beta' chain family. As to quaternary structure, the RNAP catalytic core consists of 2 alpha, 1 beta, 1 beta' and 1 omega subunit. When a sigma factor is associated with the core the holoenzyme is formed, which can initiate transcription. Requires Mg(2+) as cofactor. Zn(2+) serves as cofactor.

The enzyme catalyses RNA(n) + a ribonucleoside 5'-triphosphate = RNA(n+1) + diphosphate. In terms of biological role, DNA-dependent RNA polymerase catalyzes the transcription of DNA into RNA using the four ribonucleoside triphosphates as substrates. In Streptococcus pyogenes serotype M18 (strain MGAS8232), this protein is DNA-directed RNA polymerase subunit beta'.